Consider the following 257-residue polypeptide: Type III pantothenate kinase (257 aa).

5 to 12 serves as a coordination point for ATP; sequence DIGNTNIK. Substrate is bound at residue 107 to 110; sequence GSDR. Asp109 (proton acceptor) is an active-site residue. Thr133 provides a ligand contact to ATP.

This sequence belongs to the type III pantothenate kinase family. In terms of assembly, homodimer. It depends on NH4(+) as a cofactor. The cofactor is K(+).

The protein resides in the cytoplasm. It catalyses the reaction (R)-pantothenate + ATP = (R)-4'-phosphopantothenate + ADP + H(+). It participates in cofactor biosynthesis; coenzyme A biosynthesis; CoA from (R)-pantothenate: step 1/5. In terms of biological role, catalyzes the phosphorylation of pantothenate (Pan), the first step in CoA biosynthesis. The protein is Type III pantothenate kinase of Ehrlichia ruminantium (strain Welgevonden).